The primary structure comprises 812 residues: Lon protease (812 aa).

Positions 12 to 205 (LPMLPLRGVL…YLCELLAKEM (194 aa)) constitute a Lon N-terminal domain. 357-364 (GPPGVGKT) lines the ATP pocket. The Lon proteolytic domain maps to 593 to 774 (ENQVGVATGL…DEVLEETLLK (182 aa)). Residues serine 680 and lysine 723 contribute to the active site.

It belongs to the peptidase S16 family. As to quaternary structure, homohexamer. Organized in a ring with a central cavity.

The protein localises to the cytoplasm. The catalysed reaction is Hydrolysis of proteins in presence of ATP.. ATP-dependent serine protease that mediates the selective degradation of mutant and abnormal proteins as well as certain short-lived regulatory proteins. Required for cellular homeostasis and for survival from DNA damage and developmental changes induced by stress. Degrades polypeptides processively to yield small peptide fragments that are 5 to 10 amino acids long. Binds to DNA in a double-stranded, site-specific manner. In Syntrophomonas wolfei subsp. wolfei (strain DSM 2245B / Goettingen), this protein is Lon protease.